The sequence spans 392 residues: MAIFRDQAENHVEHDRSIEDRRRHRQLVEKSIKENLGDILSEESIIGETKNKKYKIPIRGIKEYQFIYGANNKGVTTGTGEERRGDRISSDKRKAISNNKAGNQEGKDIYETEITLEELMDYIVEDLDLPNLDRKKYSEIIVESAAKKRGYQKYGVRPRLAKKKTVMCKIARKQGKKRALREIGEEAEIGRFPFREDDLRYYKVKKHPKKESNAVMIFIMDVSGSMDNTKKYLARSFFFVLSRFIRRKYNNVAFEFISHTTTAKNVNEYEFFHKGESGGTYISSGINAAIDLIKEKYNPGVWNIYPFYASDGDNWSEDNEKAMEAVNEISDLSNMFGYIELLPSTYSTTMFYRFKKEISKKNFVSVTVKEKKDLWNAIKYMLSEELQEKNKE.

The interval 75–100 (VTTGTGEERRGDRISSDKRKAISNNK) is disordered. Residues 80–94 (GEERRGDRISSDKRK) are compositionally biased toward basic and acidic residues.

The protein belongs to the UPF0229 family.

The chain is UPF0229 protein CPF_1540 from Clostridium perfringens (strain ATCC 13124 / DSM 756 / JCM 1290 / NCIMB 6125 / NCTC 8237 / Type A).